The primary structure comprises 515 residues: Fatty acyl-CoA reductase 2 (515 aa).

At 1–464 (MSTIAAFYGG…KAKQRLKRLR (464 aa)) the chain is on the cytoplasmic side. A helical transmembrane segment spans residues 465-484 (NIHYLFNTALFLIAWRLLIA). The Peroxisomal portion of the chain corresponds to 485–515 (RSQMARNVWFFIVSFCYKFLSYFRASSTLKV).

The protein belongs to the fatty acyl-CoA reductase family.

It is found in the peroxisome membrane. It catalyses the reaction a long-chain fatty acyl-CoA + 2 NADPH + 2 H(+) = a long-chain primary fatty alcohol + 2 NADP(+) + CoA. The catalysed reaction is a very long-chain fatty acyl-CoA + 2 NADPH + 2 H(+) = a very long-chain primary fatty alcohol + 2 NADP(+) + CoA. The enzyme catalyses an ultra-long-chain fatty acyl-CoA + 2 NADPH + 2 H(+) = an ultra long-chain primary fatty alcohol + 2 NADP(+) + CoA. It carries out the reaction hexadecanoyl-CoA + 2 NADPH + 2 H(+) = hexadecan-1-ol + 2 NADP(+) + CoA. It catalyses the reaction octadecanoyl-CoA + 2 NADPH + 2 H(+) = octadecan-1-ol + 2 NADP(+) + CoA. The catalysed reaction is eicosanoyl-CoA + 2 NADPH + 2 H(+) = eicosan-1-ol + 2 NADP(+) + CoA. The enzyme catalyses docosanoyl-CoA + 2 NADPH + 2 H(+) = docosan-1-ol + 2 NADP(+) + CoA. It carries out the reaction tetracosanoyl-CoA + 2 NADPH + 2 H(+) = tetracosan-1-ol + 2 NADP(+) + CoA. It catalyses the reaction hexacosanoyl-CoA + 2 NADPH + 2 H(+) = hexacosan-1-ol + 2 NADP(+) + CoA. The catalysed reaction is octacosanoyl-CoA + 2 NADPH + 2 H(+) = octacosan-1-ol + 2 NADP(+) + CoA. The enzyme catalyses triacontanoyl-CoA + 2 NADPH + 2 H(+) = triacontan-1-ol + 2 NADP(+) + CoA. It carries out the reaction 18-methylnonadecanoyl-CoA + 2 NADPH + 2 H(+) = 18-methylnonadecan-1-ol + 2 NADP(+) + CoA. It catalyses the reaction 20-methylheneicosanoyl-CoA + 2 NADPH + 2 H(+) = 20-methylheneicosan-1-ol + 2 NADP(+) + CoA. The catalysed reaction is 22-methyltricosanoyl-CoA + 2 NADPH + 2 H(+) = 22-methyltricosan-1-ol + 2 NADP(+) + CoA. The enzyme catalyses 24-methylpentacosanoyl-CoA + 2 NADPH + 2 H(+) = 24-methylpentacosan-1-ol + 2 NADP(+) + CoA. Functionally, catalyzes the reduction of saturated but not unsaturated C16 or C18 fatty acyl-CoA to fatty alcohols (FAls). A lower activity can be observed with shorter fatty acyl-CoA substrates. Can produce very long-chain and ultra long-chain FAls, regardless of whether they have a straight or branched chain. Involved in the production of ether lipids/plasmalogens and wax monoesters whose synthesis requires FAls as substrates. The chain is Fatty acyl-CoA reductase 2 from Homo sapiens (Human).